Here is a 128-residue protein sequence, read N- to C-terminus: Protein Wnt-8 (128 aa).

S1 carries the O-palmitoleoyl serine lipid modification. Cystine bridges form between C71/C109 and C87/C102. N-linked (GlcNAc...) asparagine glycans are attached at residues N74 and N93.

The protein belongs to the Wnt family. Palmitoleoylation is required for efficient binding to frizzled receptors. Depalmitoleoylation leads to Wnt signaling pathway inhibition. In terms of processing, proteolytic processing by tiki1 and tiki2 promotes oxidation and formation of large disulfide-bond oligomers, leading to inactivation of wnt8.

The protein resides in the secreted. Its subcellular location is the extracellular space. It localises to the extracellular matrix. In terms of biological role, ligand for members of the frizzled family of seven transmembrane receptors. Probable developmental protein. May be a signaling molecule which affects the development of discrete regions of tissues. Is likely to signal over only few cell diameters. In Thunnus thynnus (Atlantic bluefin tuna), this protein is Protein Wnt-8 (wnt8).